Consider the following 246-residue polypeptide: Neuromodulin (246 aa).

The segment at 1–246 (MLCCMRRTKQ…EESKADQENA (246 aa)) is disordered. S-palmitoyl cysteine attachment occurs at residues C3 and C4. The segment covering 9–33 (KQVEKNEDGDQKIEQDGIKPEDKAH) has biased composition (basic and acidic residues). Residues 32-61 (AHKAATKIQASFRGHITRKKLKGEKKADAP) enclose the IQ domain. 2 stretches are compositionally biased toward low complexity: residues 87–99 (ASAATEASAADSA) and 125–157 (SEQPAPQAATPAASSEEKPAAAAETESATKAST). Over residues 164-176 (KADEAQDKEEPKQ) the composition is skewed to basic and acidic residues. A compositionally biased stretch (low complexity) spans 177-203 (ADVPAADTTATTTPAAEDATAKATAQP). Composition is skewed to basic and acidic residues over residues 213-225 (TEEKTDAVEETKP) and 237-246 (EESKADQENA).

It belongs to the neuromodulin family. Binds calmodulin with a greater affinity in the absence of Ca(2+) than in its presence. Post-translationally, palmitoylated. Palmitoylation is essential for plasma membrane association. In terms of tissue distribution, expressed in neurons.

It is found in the cell membrane. The protein localises to the cell projection. It localises to the growth cone membrane. The protein resides in the synapse. Its subcellular location is the filopodium membrane. In terms of biological role, this protein is associated with nerve growth. It is a major component of the motile 'growth cones' that form the tips of elongating axons. Plays a role in axonal and dendritic filopodia induction. In Gallus gallus (Chicken), this protein is Neuromodulin (GAP43).